The sequence spans 479 residues: UDP-N-acetylmuramate--L-alanine ligase (479 aa).

Residue 115–121 (GTHGKTT) participates in ATP binding.

Belongs to the MurCDEF family.

Its subcellular location is the cytoplasm. The catalysed reaction is UDP-N-acetyl-alpha-D-muramate + L-alanine + ATP = UDP-N-acetyl-alpha-D-muramoyl-L-alanine + ADP + phosphate + H(+). Its pathway is cell wall biogenesis; peptidoglycan biosynthesis. Cell wall formation. This is UDP-N-acetylmuramate--L-alanine ligase from Acidiphilium cryptum (strain JF-5).